A 227-amino-acid chain; its full sequence is Protein GET1 (227 aa).

Residues Met-1–Leu-3 lie on the Lumenal side of the membrane. The helical transmembrane segment at Leu-4 to Asn-23 threads the bilayer. The Cytoplasmic portion of the chain corresponds to Val-24–Ile-107. The stretch at Ala-72–Lys-96 forms a coiled coil. A helical transmembrane segment spans residues Trp-108–Phe-128. Topologically, residues Tyr-129–Ser-151 are lumenal. The chain crosses the membrane as a helical span at residues Val-152–Leu-168. Over Glu-169–Ser-227 the chain is Cytoplasmic. The segment at Glu-184–Ser-227 is disordered. The segment covering Ser-190 to Ser-211 has biased composition (low complexity).

This sequence belongs to the WRB/GET1 family. In terms of assembly, interacts with GET3.

It localises to the endoplasmic reticulum membrane. In terms of biological role, required for the post-translational delivery of tail-anchored (TA) proteins to the endoplasmic reticulum. Acts as a membrane receptor for soluble GET3, which recognizes and selectively binds the transmembrane domain of TA proteins in the cytosol. This chain is Protein GET1, found in Coprinopsis cinerea (strain Okayama-7 / 130 / ATCC MYA-4618 / FGSC 9003) (Inky cap fungus).